Reading from the N-terminus, the 410-residue chain is Cysteine desulfurase IscS (410 aa).

Pyridoxal 5'-phosphate is bound by residues 80–81 (AT), Asn160, Gln188, and 208–210 (SGH). Position 211 is an N6-(pyridoxal phosphate)lysine (Lys211). Thr248 is a binding site for pyridoxal 5'-phosphate. Cys334 (cysteine persulfide intermediate) is an active-site residue. Cys334 contacts [2Fe-2S] cluster.

This sequence belongs to the class-V pyridoxal-phosphate-dependent aminotransferase family. NifS/IscS subfamily. In terms of assembly, homodimer. Forms a heterotetramer with IscU, interacts with other sulfur acceptors. Requires pyridoxal 5'-phosphate as cofactor.

The protein localises to the cytoplasm. It carries out the reaction (sulfur carrier)-H + L-cysteine = (sulfur carrier)-SH + L-alanine. Its pathway is cofactor biosynthesis; iron-sulfur cluster biosynthesis. In terms of biological role, master enzyme that delivers sulfur to a number of partners involved in Fe-S cluster assembly, tRNA modification or cofactor biosynthesis. Catalyzes the removal of elemental sulfur atoms from cysteine to produce alanine. Functions as a sulfur delivery protein for Fe-S cluster synthesis onto IscU, an Fe-S scaffold assembly protein, as well as other S acceptor proteins. In Rickettsia rickettsii (strain Iowa), this protein is Cysteine desulfurase IscS.